A 217-amino-acid polypeptide reads, in one-letter code: Frataxin, mitochondrial (217 aa).

A mitochondrion-targeting transit peptide spans 1–42; it reads MWTLGRRSVASFLPRSALPGFAPTRAGAPRPAKDLSLSGLPG.

The protein belongs to the frataxin family. Component of the mitochondrial core iron-sulfur cluster (ISC) complex composed of NFS1, LYRM4, NDUFAB1, ISCU, FXN, and FDX2; this complex is a heterohexamer containing two copies of each monomer. Homodimer. Monomer (probable predominant form). Oligomer. Monomers and polymeric aggregates of &gt;1 MDa have been isolated from mitochondria. A small fraction of heterologous overexpressed recombinant frataxin forms high-molecular weight aggregates that incorporate iron. Interacts with LYRM4. Interacts (via ferrous form) with ISCU; the interaction is possible when both are bound to the dimeric form of the cysteine desulfurase complex (NFS1:LYRM4) and the interaction enhances FXN interaction to the dimeric form of the cysteine desulfurase complex (NFS1:LYRM4). Interacts with FECH; one iron-bound FXN monomer seems to interact with a FECH homodimer. Interacts with SDHA and SDHB. Interacts with ACO2; the interaction is dependent on citrate. Interacts with HSPA9. As to quaternary structure, interacts with ACO1. Interacts with ISCU (cytoplasmic form). Post-translationally, processed in two steps by mitochondrial processing peptidase (MPP). MPP first cleaves the precursor to intermediate form and subsequently converts the intermediate to yield frataxin mature form (frataxin(81-210)) which is the predominant form. The additional forms, frataxin(56-210) and frataxin(78-210), seem to be produced when the normal maturation process is impaired; their physiological relevance is unsure.

The protein resides in the mitochondrion. Its subcellular location is the cytoplasm. It is found in the cytosol. The catalysed reaction is 4 Fe(2+) + O2 + 4 H(+) = 4 Fe(3+) + 2 H2O. Functions as an activator of persulfide transfer to the scaffoding protein ISCU as component of the core iron-sulfur cluster (ISC) assembly complex and participates to the [2Fe-2S] cluster assembly. Accelerates sulfur transfer from NFS1 persulfide intermediate to ISCU and to small thiols such as L-cysteine and glutathione leading to persulfuration of these thiols and ultimately sulfide release. Binds ferrous ion and is released from FXN upon the addition of both L-cysteine and reduced FDX2 during [2Fe-2S] cluster assembly. The core iron-sulfur cluster (ISC) assembly complex is involved in the de novo synthesis of a [2Fe-2S] cluster, the first step of the mitochondrial iron-sulfur protein biogenesis. This process is initiated by the cysteine desulfurase complex (NFS1:LYRM4:NDUFAB1) that produces persulfide which is delivered on the scaffold protein ISCU in a FXN-dependent manner. Then this complex is stabilized by FDX2 which provides reducing equivalents to accomplish the [2Fe-2S] cluster assembly. Finally, the [2Fe-2S] cluster is transferred from ISCU to chaperone proteins, including HSCB, HSPA9 and GLRX5. May play a role in the protection against iron-catalyzed oxidative stress through its ability to catalyze the oxidation of Fe(2+) to Fe(3+); the oligomeric form but not the monomeric form has in vitro ferroxidase activity. May be able to store large amounts of iron in the form of a ferrihydrite mineral by oligomerization; however, the physiological relevance is unsure as reports are conflicting and the function has only been shown using heterologous overexpression systems. May function as an iron chaperone protein that protects the aconitase [4Fe-4S]2+ cluster from disassembly and promotes enzyme reactivation. May play a role as a high affinity iron binding partner for FECH that is capable of both delivering iron to ferrochelatase and mediating the terminal step in mitochondrial heme biosynthesis. Functionally, modulates the RNA-binding activity of ACO1. May be involved in the cytoplasmic iron-sulfur protein biogenesis. May contribute to oxidative stress resistance and overall cell survival. The protein is Frataxin, mitochondrial of Bos taurus (Bovine).